Reading from the N-terminus, the 732-residue chain is Adducin-related protein 1 (732 aa).

2 disordered regions span residues 1-22 (MIGRKEKERERPYYRDPDDPEY) and 684-732 (TRFS…KKDK). A compositionally biased stretch (polar residues) spans 685-705 (RFSSTQGTSEGNTTSRSCTTA). Residues 716-732 (KKKKKKGFLSFMRKKDK) show a composition bias toward basic residues.

Belongs to the aldolase class II family. Adducin subfamily.

Its subcellular location is the cytoplasm. It localises to the cytoskeleton. The protein resides in the cell membrane. Membrane-cytoskeleton-associated protein that promotes the assembly of the spectrin-actin network. Plays a role in time-dependent memmory loss and the retention of conditioned behavior over time. The polypeptide is Adducin-related protein 1 (Caenorhabditis elegans).